A 440-amino-acid polypeptide reads, in one-letter code: Transposon Ty1-PR2 Gag polyprotein (440 aa).

3 stretches are compositionally biased toward polar residues: residues 1–10, 48–60, and 127–152; these read MESQQLSNYP, TKAN…TPAS, and QSQF…GNTF. 3 disordered regions span residues 1–93, 126–173, and 352–440; these read MESQ…MMTQ, PQSQ…RPPP, and GSRN…PETY. Low complexity predominate over residues 153–165; that stretch reads TDSSSADSDMTST. Positions 299–401 are RNA-binding; sequence NNGIHINNKV…NSKSKTARAH (103 aa). Residues 402–418 show a composition bias toward low complexity; the sequence is NVSTSNNSPSTDNDSIS. Ser-416 carries the phosphoserine modification. Residues 419 to 428 show a composition bias toward polar residues; sequence KSTTEPIQLN. A compositionally biased stretch (basic and acidic residues) spans 429 to 440; the sequence is NKHDLHLRPETY.

As to quaternary structure, homotrimer.

The protein localises to the cytoplasm. Capsid protein (CA) is the structural component of the virus-like particle (VLP), forming the shell that encapsulates the retrotransposons dimeric RNA genome. The particles are assembled from trimer-clustered units and there are holes in the capsid shells that allow for the diffusion of macromolecules. CA also has nucleocapsid-like chaperone activity, promoting primer tRNA(i)-Met annealing to the multipartite primer-binding site (PBS), dimerization of Ty1 RNA and initiation of reverse transcription. The chain is Transposon Ty1-PR2 Gag polyprotein (TY1A-PR2) from Saccharomyces cerevisiae (strain ATCC 204508 / S288c) (Baker's yeast).